Consider the following 701-residue polypeptide: Glycine--tRNA ligase beta subunit (701 aa).

It belongs to the class-II aminoacyl-tRNA synthetase family. As to quaternary structure, tetramer of two alpha and two beta subunits.

The protein localises to the cytoplasm. It carries out the reaction tRNA(Gly) + glycine + ATP = glycyl-tRNA(Gly) + AMP + diphosphate. The protein is Glycine--tRNA ligase beta subunit of Thiobacillus denitrificans (strain ATCC 25259 / T1).